The sequence spans 847 residues: Signal transducer and activator of transcription 6 (847 aa).

Serine 2 carries the post-translational modification N-acetylserine. One can recognise an SH2 domain in the interval 517-632 (WFDGVLDLTK…EAFRSHYKPE (116 aa)). Tyrosine 641 bears the Phosphotyrosine; by JAK mark. An LXXLL motif motif is present at residues 802–806 (LTKLL). The tract at residues 809-847 (GQGESGGGSLGAQPLLQPSHYGQSGISMSHMDLRANPSW) is disordered.

This sequence belongs to the transcription factor STAT family. Forms a homodimer or a heterodimer with a related family member. Interacts with NCOA1 via its C-terminal LXXLL motif. Tyrosine phosphorylated on Tyr-641 following stimulation by IL4/interleukin-4. Tyrosine phosphorylated following stimulation by IL3/interleukin-3. Dephosphorylation on tyrosine residues by PTPN2 negatively regulates the IL4/interleukin-4 mediated signaling. In terms of processing, mono-ADP-ribosylated by PARP14.

Its subcellular location is the cytoplasm. The protein resides in the nucleus. Its function is as follows. Carries out a dual function: signal transduction and activation of transcription. Involved in IL4/interleukin-4- and IL3/interleukin-3-mediated signaling. The sequence is that of Signal transducer and activator of transcription 6 (STAT6) from Homo sapiens (Human).